Reading from the N-terminus, the 525-residue chain is GMP synthase [glutamine-hydrolyzing] (525 aa).

A Glutamine amidotransferase type-1 domain is found at 8-207 (KILILDFGSQ…VMDICGCDNK (200 aa)). Cysteine 85 acts as the Nucleophile in catalysis. Catalysis depends on residues histidine 181 and glutamate 183. The 193-residue stretch at 208-400 (WQPASIIEDA…LGLPYDMLYR (193 aa)) folds into the GMPS ATP-PPase domain. 235–241 (SGGVDSS) provides a ligand contact to ATP.

Homodimer.

It carries out the reaction XMP + L-glutamine + ATP + H2O = GMP + L-glutamate + AMP + diphosphate + 2 H(+). Its pathway is purine metabolism; GMP biosynthesis; GMP from XMP (L-Gln route): step 1/1. Its function is as follows. Catalyzes the synthesis of GMP from XMP. The polypeptide is GMP synthase [glutamine-hydrolyzing] (Shewanella amazonensis (strain ATCC BAA-1098 / SB2B)).